The following is a 539-amino-acid chain: Chaperonin GroEL (539 aa).

Residues 29-32 (TLGP), 86-90 (DGTTT), glycine 413, 477-479 (NAA), and aspartate 493 contribute to the ATP site.

This sequence belongs to the chaperonin (HSP60) family. As to quaternary structure, forms a cylinder of 14 subunits composed of two heptameric rings stacked back-to-back. Interacts with the co-chaperonin GroES.

The protein localises to the cytoplasm. The enzyme catalyses ATP + H2O + a folded polypeptide = ADP + phosphate + an unfolded polypeptide.. Together with its co-chaperonin GroES, plays an essential role in assisting protein folding. The GroEL-GroES system forms a nano-cage that allows encapsulation of the non-native substrate proteins and provides a physical environment optimized to promote and accelerate protein folding. The sequence is that of Chaperonin GroEL from Clavibacter michiganensis subsp. michiganensis (strain NCPPB 382).